The following is a 450-amino-acid chain: N-lysine methyltransferase SETD6 (450 aa).

Residues 1–10 show a composition bias toward basic residues; that stretch reads MATQAKRRRV. The disordered stretch occupies residues 1 to 20; the sequence is MATQAKRRRVAGPAGSDDDP. The 225-residue stretch at 39 to 263 folds into the SET domain; it reads PKVAVSRQGT…KGHEIFNTYG (225 aa). The residue at position 40 (Lys-40) is an N6-methylated lysine; by autocatalysis. 50–52 serves as a coordination point for S-adenosyl-L-methionine; sequence AGY. Trp-99 is a substrate binding site. At Lys-156 the chain carries N6-methylated lysine; by autocatalysis. Residue Tyr-200 coordinates S-adenosyl-L-methionine. The substrate site is built by Ser-201 and Gln-203. S-adenosyl-L-methionine is bound by residues 228 to 229 and Tyr-274; that span reads NH. N6-methylated lysine; by autocatalysis is present on Lys-349.

This sequence belongs to the class V-like SAM-binding methyltransferase superfamily. Histone-lysine methyltransferase family. SETD6 subfamily. As to quaternary structure, monomer, homodimer and homotrimer; these structures are stabilized in the presence of S-adenosyl-L-methionine (SAM). In terms of processing, automethylated.

Its subcellular location is the nucleus. It carries out the reaction L-lysyl-[protein] + S-adenosyl-L-methionine = N(6)-methyl-L-lysyl-[protein] + S-adenosyl-L-homocysteine + H(+). The enzyme catalyses L-lysyl(8)-[histone H2AZ] + S-adenosyl-L-methionine = N(6)-methyl-L-lysyl(8)-[histone H2AZ] + S-adenosyl-L-homocysteine + H(+). Functionally, protein-lysine N-methyltransferase. Monomethylates 'Lys-310' of the RELA subunit of NF-kappa-B complex, leading to down-regulation of NF-kappa-B transcription factor activity. Monomethylates 'Lys-8' of H2AZ (H2AZK8me1). Required for the maintenance of embryonic stem cell self-renewal. Methylates PAK4. The sequence is that of N-lysine methyltransferase SETD6 (SETD6) from Bos taurus (Bovine).